The sequence spans 376 residues: MDVLAEANGTFALNLLKTLGKDNSKNVFFSPMSMSCALAMVYMGAKGNTAAQMAQVLSFNKSGGGGDIHQGFQSLLTEVNKTGTQYLLRTANRLFGEKSCDFLSSFRDSCQKFYQAEMEELDFISAVEKSRKHINSWVAEKTEGKIAELLSPGSVDPLTRLVLVNAVYFKGNWNEQFDKENTEERRFKVSKNEEKPVQMMFMQSTFRKTYIGEIFTQILVLPYVGKELNMIIMLPDETTDLRTVEKELTYEKFVEWTRLDMMDEEKVEVSLPRFKLEESYDMESVLCSLGMTDAFELGKADFSGMSKADLCLSKVVHKSFVEVNEEGTEAAAATAAIMMMRCARFVPRFCADHPFLFFIQHSKTNGVLFCGRFSSP.

An N-acetylmethionine modification is found at methionine 1. Serine 151 carries the post-translational modification Phosphoserine. Lysine 195 carries the N6-acetyllysine modification.

This sequence belongs to the serpin family. Ov-serpin subfamily. Forms a complex with the monomeric form of beta-tryptase.

It is found in the cytoplasm. Functionally, inhibitor of cathepsin G, kallikrein-8 and thrombin. May play an important role in the inner ear in the protection against leakage of lysosomal content during stress. May be involved in the regulation of serine proteinases present in the brain or extravasated from the blood. The sequence is that of Serpin B6 (SERPINB6) from Macaca fascicularis (Crab-eating macaque).